The primary structure comprises 1003 residues: X-linked retinitis pigmentosa GTPase regulator (1003 aa).

6 RCC1 repeats span residues 54–105, 106–158, 159–208, 209–261, 262–313, and 314–367; these read NKLY…STEG, GKVY…LTED, GELF…VTTE, GQLY…LTEK, AVYT…ITDM, and GLMY…FATP. The residue at position 418 (S418) is a Phosphoserine. The tract at residues 460–495 is disordered; sequence TPEKEGLTQPEPDYFRDNMAKGKETDNSSATDSESL. Over residues 472 to 485 the composition is skewed to basic and acidic residues; that stretch reads DYFRDNMAKGKETD. Residues 486-495 show a composition bias toward polar residues; it reads NSSATDSESL. Position 520 is a phosphoserine (S520). Disordered stretches follow at residues 625–657, 691–760, 794–932, and 968–1003; these read FKAI…LAEM, ESKD…TDQN, LSEI…DVKK, and AFKG…CTIL. Positions 693–715 are enriched in basic and acidic residues; that stretch reads KDFVKDSRRNKQDVIFDSERESI. 2 stretches are compositionally biased toward acidic residues: residues 716–726 and 797–821; these read EEPDSYLEGES and IPEE…EANE. Basic and acidic residues predominate over residues 827–848; it reads AGKEEKEIEILSDDLTDRAEDH. The segment covering 849–867 has biased composition (acidic residues); that stretch reads EFSEDEEPEDMAEELDEDL. The segment covering 882–896 has biased composition (basic and acidic residues); it reads SLKKDETTKQEKRAI. Over residues 913–924 the composition is skewed to low complexity; that stretch reads SSSSEVLNDSES. The segment covering 978–989 has biased composition (polar residues); it reads QNHMGQNHQDTS. Residue C1000 is modified to Cysteine methyl ester. The S-geranylgeranyl cysteine moiety is linked to residue C1000. The propeptide at 1001–1003 is removed in mature form; sequence TIL.

As to quaternary structure, interacts with PDE6D. Interacts with RPGRIP1. Interacts with RPGRIP1L. PDE6D, RPGRIP1 and RPGRIP1L may compete for the same binding sites. Interacts with NPM1. Interacts with SMC1A and SMC3. Interacts with CEP290. Interacts with WHRN. Interacts with SPATA7. Interacts with RAB37 and RAB8A (in GDP-bound forms); functions as GEF for RAB37 and RAB8A. Post-translationally, prenylated. As to expression, isoform 1 is expressed exclusively in testis. Isoforms 2, 3 and 4 are widely expressed.

The protein resides in the golgi apparatus. Its subcellular location is the cell projection. It localises to the cilium. The protein localises to the cytoplasm. It is found in the cytoskeleton. The protein resides in the cilium basal body. Its subcellular location is the microtubule organizing center. It localises to the centrosome. The protein localises to the cilium axoneme. It is found in the flagellum axoneme. Functionally, acts as a guanine-nucleotide releasing factor (GEF) for RAB8A and RAB37 by promoting the conversion of inactive RAB-GDP to the active form RAB-GTP. GEF activity towards RAB8A may facilitate ciliary trafficking by modulating ciliary intracellular localization of RAB8A. GEF activity towards RAB37 maintains autophagic homeostasis and retinal function. Involved in photoreceptor integrity. May control cilia formation by regulating actin stress filaments and cell contractility. May be involved in microtubule organization and regulation of transport in primary cilia. May play a critical role in spermatogenesis and in intraflagellar transport processes. This is X-linked retinitis pigmentosa GTPase regulator (RPGR) from Canis lupus familiaris (Dog).